Reading from the N-terminus, the 436-residue chain is Protein MSS51, mitochondrial (436 aa).

The N-terminal 26 residues, M1–L26, are a transit peptide targeting the mitochondrion. The disordered stretch occupies residues A43–Q66.

It belongs to the MSS51 family. Interacts with COX1 and COX14.

It localises to the mitochondrion inner membrane. Has a dual role in the assembly of cytochrome oxidase subunit 1 (COX1). It has a regulative function on COX1 synthesis, acting as a translational activator specific for the COX1 mRNA, and it also binds to newly synthesized COX1 protein. Together with COX14, may act as a chaperone that binds efficiently unassembled COX1 and prevents it from unproductive aggregation. When bound to COX1, MSS51 is unable to interact with the COX1 mRNA and translation is halted. This may be a feedback control that ensures that COX1 is only produced as long as potentially harmful assembly intermediates are not accumulating. The chain is Protein MSS51, mitochondrial (MSS51) from Saccharomyces cerevisiae (strain ATCC 204508 / S288c) (Baker's yeast).